The sequence spans 410 residues: Kynureninase (410 aa).

Residues threonine 108, serine 109, 135–138, threonine 176, aspartate 205, histidine 208, and tyrosine 230 each bind pyridoxal 5'-phosphate; that span reads FPTD. At lysine 231 the chain carries N6-(pyridoxal phosphate)lysine. Tryptophan 260 and threonine 286 together coordinate pyridoxal 5'-phosphate.

Belongs to the kynureninase family. In terms of assembly, homodimer. Requires pyridoxal 5'-phosphate as cofactor.

The catalysed reaction is L-kynurenine + H2O = anthranilate + L-alanine + H(+). It carries out the reaction 3-hydroxy-L-kynurenine + H2O = 3-hydroxyanthranilate + L-alanine + H(+). The protein operates within amino-acid degradation; L-kynurenine degradation; L-alanine and anthranilate from L-kynurenine: step 1/1. Its pathway is cofactor biosynthesis; NAD(+) biosynthesis; quinolinate from L-kynurenine: step 2/3. In terms of biological role, catalyzes the cleavage of L-kynurenine (L-Kyn) and L-3-hydroxykynurenine (L-3OHKyn) into anthranilic acid (AA) and 3-hydroxyanthranilic acid (3-OHAA), respectively. In Deinococcus radiodurans (strain ATCC 13939 / DSM 20539 / JCM 16871 / CCUG 27074 / LMG 4051 / NBRC 15346 / NCIMB 9279 / VKM B-1422 / R1), this protein is Kynureninase.